The sequence spans 423 residues: 4-hydroxy-3-methylbut-2-en-1-yl diphosphate synthase (flavodoxin) (423 aa).

[4Fe-4S] cluster is bound by residues cysteine 307, cysteine 310, cysteine 353, and glutamate 360.

It belongs to the IspG family. Requires [4Fe-4S] cluster as cofactor.

It catalyses the reaction (2E)-4-hydroxy-3-methylbut-2-enyl diphosphate + oxidized [flavodoxin] + H2O + 2 H(+) = 2-C-methyl-D-erythritol 2,4-cyclic diphosphate + reduced [flavodoxin]. The protein operates within isoprenoid biosynthesis; isopentenyl diphosphate biosynthesis via DXP pathway; isopentenyl diphosphate from 1-deoxy-D-xylulose 5-phosphate: step 5/6. Its function is as follows. Converts 2C-methyl-D-erythritol 2,4-cyclodiphosphate (ME-2,4cPP) into 1-hydroxy-2-methyl-2-(E)-butenyl 4-diphosphate. This Brucella anthropi (strain ATCC 49188 / DSM 6882 / CCUG 24695 / JCM 21032 / LMG 3331 / NBRC 15819 / NCTC 12168 / Alc 37) (Ochrobactrum anthropi) protein is 4-hydroxy-3-methylbut-2-en-1-yl diphosphate synthase (flavodoxin).